A 485-amino-acid polypeptide reads, in one-letter code: Trigger factor (485 aa).

Residues 171 to 256 enclose the PPIase FKBP-type domain; the sequence is GDRVVIDFVG…VKAVKAPGEA (86 aa). Residues 443–485 form a disordered region; sequence FADDEDEAAEAAAPASEAGASKGVISEGVISEGSAPSHETGAA. Residues 452–462 are compositionally biased toward low complexity; that stretch reads EAAAPASEAGA.

The protein belongs to the FKBP-type PPIase family. Tig subfamily.

The protein resides in the cytoplasm. It carries out the reaction [protein]-peptidylproline (omega=180) = [protein]-peptidylproline (omega=0). In terms of biological role, involved in protein export. Acts as a chaperone by maintaining the newly synthesized protein in an open conformation. Functions as a peptidyl-prolyl cis-trans isomerase. The protein is Trigger factor of Methylobacterium sp. (strain 4-46).